A 120-amino-acid chain; its full sequence is Large ribosomal subunit protein eL34 (120 aa).

It belongs to the eukaryotic ribosomal protein eL34 family.

The polypeptide is Large ribosomal subunit protein eL34 (RPL34) (Nicotiana tabacum (Common tobacco)).